The chain runs to 432 residues: Serine--tRNA ligase (432 aa).

An L-serine-binding site is contributed by 236 to 238 (TSE). Position 267 to 269 (267 to 269 (RSE)) interacts with ATP. Residue glutamate 290 participates in L-serine binding. ATP is bound at residue 354-357 (EISS). Serine 390 provides a ligand contact to L-serine.

Belongs to the class-II aminoacyl-tRNA synthetase family. Type-1 seryl-tRNA synthetase subfamily. Homodimer. The tRNA molecule binds across the dimer.

The protein resides in the cytoplasm. The catalysed reaction is tRNA(Ser) + L-serine + ATP = L-seryl-tRNA(Ser) + AMP + diphosphate + H(+). It carries out the reaction tRNA(Sec) + L-serine + ATP = L-seryl-tRNA(Sec) + AMP + diphosphate + H(+). It participates in aminoacyl-tRNA biosynthesis; selenocysteinyl-tRNA(Sec) biosynthesis; L-seryl-tRNA(Sec) from L-serine and tRNA(Sec): step 1/1. Its function is as follows. Catalyzes the attachment of serine to tRNA(Ser). Is also able to aminoacylate tRNA(Sec) with serine, to form the misacylated tRNA L-seryl-tRNA(Sec), which will be further converted into selenocysteinyl-tRNA(Sec). This is Serine--tRNA ligase from Pseudoalteromonas atlantica (strain T6c / ATCC BAA-1087).